The primary structure comprises 356 residues: Peptide chain release factor 1 (356 aa).

Residue Gln233 is modified to N5-methylglutamine.

Belongs to the prokaryotic/mitochondrial release factor family. In terms of processing, methylated by PrmC. Methylation increases the termination efficiency of RF1.

It localises to the cytoplasm. Its function is as follows. Peptide chain release factor 1 directs the termination of translation in response to the peptide chain termination codons UAG and UAA. The protein is Peptide chain release factor 1 of Oceanobacillus iheyensis (strain DSM 14371 / CIP 107618 / JCM 11309 / KCTC 3954 / HTE831).